Here is a 463-residue protein sequence, read N- to C-terminus: Rubisco accumulation factor 1, chloroplastic (463 aa).

The span at 1–18 (MLSLSHPHPHPAASTTAP) shows a compositional bias: low complexity. The transit peptide at 1–31 (MLSLSHPHPHPAASTTAPRHQRTAPVWHRRR) directs the protein to the chloroplast. The interval 1-84 (MLSLSHPHPH…PFHPPPSPLP (84 aa)) is disordered. A compositionally biased stretch (basic residues) spans 19–33 (RHQRTAPVWHRRRAS). Over residues 43–53 (PGGGSTGGRGG) the composition is skewed to gly residues. Residues 83 to 275 (LPPSLRNLDL…SGRARVELEL (193 aa)) are N-terminal alpha-helix. A coiled-coil region spans residues 240–294 (RQSREAIDVQDRVAELERALQVVETESGRARVELELERARRKAAGEEEVDEEGEE). The tract at residues 305–450 (VTVVRLRYGE…AEVVIVVRPP (146 aa)) is C-terminal beta sheet.

Belongs to the RAF family. As to quaternary structure, homotrimer. In terms of tissue distribution, expressed in bundle sheath.

The protein resides in the plastid. It is found in the chloroplast. In terms of biological role, required for assembly or stability of RuBisCO. Acts at a postchaperonin step to fold and/or assemble the large subunit (LS) into RuBisCO. The sequence is that of Rubisco accumulation factor 1, chloroplastic from Zea mays (Maize).